A 430-amino-acid chain; its full sequence is Probable ribosomal RNA small subunit methyltransferase B (430 aa).

Residues 246–252 (CAAPGSK), aspartate 270, aspartate 299, and aspartate 318 each bind S-adenosyl-L-methionine. Cysteine 371 serves as the catalytic Nucleophile.

It belongs to the class I-like SAM-binding methyltransferase superfamily. RsmB/NOP family.

It localises to the cytoplasm. It carries out the reaction cytidine(967) in 16S rRNA + S-adenosyl-L-methionine = 5-methylcytidine(967) in 16S rRNA + S-adenosyl-L-homocysteine + H(+). Specifically methylates the cytosine at position 967 (m5C967) of 16S rRNA. The polypeptide is Probable ribosomal RNA small subunit methyltransferase B (Coxiella burnetii (strain RSA 493 / Nine Mile phase I)).